Consider the following 186-residue polypeptide: Small ribosomal subunit protein eS7 (186 aa).

This sequence belongs to the eukaryotic ribosomal protein eS7 family. In terms of assembly, component of the small ribosomal subunit. Mature ribosomes consist of a small (40S) and a large (60S) subunit. The 40S subunit contains about 32 different proteins and 1 molecule of RNA (18S). The 60S subunit contains 45 different proteins and 3 molecules of RNA (25S, 5.8S and 5S).

It is found in the cytoplasm. In terms of biological role, component of the ribosome, a large ribonucleoprotein complex responsible for the synthesis of proteins in the cell. The small ribosomal subunit (SSU) binds messenger RNAs (mRNAs) and translates the encoded message by selecting cognate aminoacyl-transfer RNA (tRNA) molecules. The large subunit (LSU) contains the ribosomal catalytic site termed the peptidyl transferase center (PTC), which catalyzes the formation of peptide bonds, thereby polymerizing the amino acids delivered by tRNAs into a polypeptide chain. The nascent polypeptides leave the ribosome through a tunnel in the LSU and interact with protein factors that function in enzymatic processing, targeting, and the membrane insertion of nascent chains at the exit of the ribosomal tunnel. RPS7A is involved in nucleolar processing of pre-18S ribosomal RNA and ribosome assembly. The protein is Small ribosomal subunit protein eS7 (RPS7A) of Candida albicans (strain SC5314 / ATCC MYA-2876) (Yeast).